The primary structure comprises 601 residues: MVMSELRWHTASPEDNKNSLKRDLLKSTPTSAREAAVHIMQNRYISRLSRSPSPLQSNASDCDDNNSSVGTSSDRCRSPLSPALSLSHQQAKRQLMSLQPHPAHHHHNPHHLNHLNHHQYKQEEDYDDANGGALNLTSDNSRHSTQSPSNSVKSATASPVPVISVPSPVPPMISPVLAPSGCGSTTPNSMAAAAAAAAAVASTMGSGISPLLALPGMSSPQAQLAAAGLGMNNPLLTGSLSPQDFAQFHQLLQQRQVALTQQFNSYMELLRSGSLGLAQDDPALTAQVAAAQFLMQSQLQALSQASQQLQALQKQQQRQVDEPLQLNHKMTQQPRSSTPHSIRSPIAIRSPASSPQQLHHHHHHPLQITPPSSAASLKLSGMLTPSTPTSGTQMSQGTTTPQPKTVASAAAARAAGEPSPEETTDLEELEQFAKTFKQRRIKLGFTQGDVGLAMGKLYGNDFSQTTISRFEALNLSFKNMCKLKPLLQKWLDDADRTIQATGGVFDPAALQATVSTPEIIGRRRKKRTSIETTIRGALEKAFLANQKPTSEEITQLADRLSMEKEVVRVWFCNRRQKEKRINPSLDSPTGADDDESSYMMH.

Basic and acidic residues predominate over residues 1-25 (MVMSELRWHTASPEDNKNSLKRDLL). Disordered stretches follow at residues 1-32 (MVMSELRWHTASPEDNKNSLKRDLLKSTPTSA), 49-94 (SRSP…AKRQ), 121-158 (KQEEDYDDANGGALNLTSDNSRHSTQSPSNSVKSATAS), 351-425 (PASS…ETTD), and 581-601 (INPSLDSPTGADDDESSYMMH). Residues 49-68 (SRSPSPLQSNASDCDDNNSS) are compositionally biased toward low complexity. Polar residues predominate over residues 135–157 (NLTSDNSRHSTQSPSNSVKSATA). Over residues 384–415 (TPSTPTSGTQMSQGTTTPQPKTVASAAAARAA) the composition is skewed to low complexity. Residues 421-495 (EETTDLEELE…LLQKWLDDAD (75 aa)) enclose the POU-specific domain. The homeobox DNA-binding region spans 523–582 (RRKKRTSIETTIRGALEKAFLANQKPTSEEITQLADRLSMEKEVVRVWFCNRRQKEKRIN). Positions 591–601 (ADDDESSYMMH) are enriched in acidic residues.

Belongs to the POU transcription factor family. Class-2 subfamily. As to expression, initial expression in cellular blastoderm stage, then in ectodermal stripes during germband extension. Broad expression in the neuroectoderm followed by limitation to discrete subsets of CNS cells, and expression in specific PNS neurons and support cells.

The protein resides in the nucleus. DNA-binding regulatory protein implicated in early development. Involved in neuronal cell fate decision. Repressed directly or indirectly by the BX-C homeotic proteins. The chain is Protein nubbin (nub) from Drosophila melanogaster (Fruit fly).